The primary structure comprises 197 residues: Holliday junction branch migration complex subunit RuvA (197 aa).

Positions 1 to 64 (MYEYIKGTYM…EDFIGLYGFG (64 aa)) are domain I. The tract at residues 65 to 143 (SKEELELFNK…VNLDEGIQTD (79 aa)) is domain II. Residues 144 to 149 (SNDIKV) are flexible linker. Positions 149–197 (VSSKILEEAKEALMSLGYSEKECEKALKNVEEKESLEIIIKESLKFLMN) are domain III.

Belongs to the RuvA family. As to quaternary structure, homotetramer. Forms an RuvA(8)-RuvB(12)-Holliday junction (HJ) complex. HJ DNA is sandwiched between 2 RuvA tetramers; dsDNA enters through RuvA and exits via RuvB. An RuvB hexamer assembles on each DNA strand where it exits the tetramer. Each RuvB hexamer is contacted by two RuvA subunits (via domain III) on 2 adjacent RuvB subunits; this complex drives branch migration. In the full resolvosome a probable DNA-RuvA(4)-RuvB(12)-RuvC(2) complex forms which resolves the HJ.

It is found in the cytoplasm. The RuvA-RuvB-RuvC complex processes Holliday junction (HJ) DNA during genetic recombination and DNA repair, while the RuvA-RuvB complex plays an important role in the rescue of blocked DNA replication forks via replication fork reversal (RFR). RuvA specifically binds to HJ cruciform DNA, conferring on it an open structure. The RuvB hexamer acts as an ATP-dependent pump, pulling dsDNA into and through the RuvAB complex. HJ branch migration allows RuvC to scan DNA until it finds its consensus sequence, where it cleaves and resolves the cruciform DNA. The sequence is that of Holliday junction branch migration complex subunit RuvA from Hathewaya histolytica (Clostridium histolyticum).